The chain runs to 1043 residues: Isoleucine--tRNA ligase (1043 aa).

Positions 48–58 match the 'HIGH' region motif; it reads PFATGLPHYGH. The 'KMSKS' region signature appears at 591–595; that stretch reads KMSKR. ATP is bound at residue K594.

The protein belongs to the class-I aminoacyl-tRNA synthetase family. IleS type 2 subfamily. In terms of assembly, monomer. It depends on Zn(2+) as a cofactor.

It is found in the cytoplasm. It catalyses the reaction tRNA(Ile) + L-isoleucine + ATP = L-isoleucyl-tRNA(Ile) + AMP + diphosphate. Its function is as follows. Catalyzes the attachment of isoleucine to tRNA(Ile). As IleRS can inadvertently accommodate and process structurally similar amino acids such as valine, to avoid such errors it has two additional distinct tRNA(Ile)-dependent editing activities. One activity is designated as 'pretransfer' editing and involves the hydrolysis of activated Val-AMP. The other activity is designated 'posttransfer' editing and involves deacylation of mischarged Val-tRNA(Ile). In Chlamydia pneumoniae (Chlamydophila pneumoniae), this protein is Isoleucine--tRNA ligase.